The chain runs to 301 residues: Glutamyl-Q tRNA(Asp) synthetase (301 aa).

L-glutamate-binding positions include 8–12 (RFAPS) and Glu44. The short motif at 11-21 (PSPTGPLHFGS) is the 'HIGH' region element. Cys100, Cys102, Tyr122, and Cys126 together coordinate Zn(2+). Positions 180 and 198 each coordinate L-glutamate. Residues 236 to 240 (KLSKQ) carry the 'KMSKS' region motif. Lys239 provides a ligand contact to ATP.

It belongs to the class-I aminoacyl-tRNA synthetase family. GluQ subfamily. Zn(2+) serves as cofactor.

Its function is as follows. Catalyzes the tRNA-independent activation of glutamate in presence of ATP and the subsequent transfer of glutamate onto a tRNA(Asp). Glutamate is transferred on the 2-amino-5-(4,5-dihydroxy-2-cyclopenten-1-yl) moiety of the queuosine in the wobble position of the QUC anticodon. The chain is Glutamyl-Q tRNA(Asp) synthetase from Dechloromonas aromatica (strain RCB).